The sequence spans 368 residues: Protein pxr1 (368 aa).

2 disordered regions span residues 1 to 28 (MGLA…TDSF) and 161 to 339 (KEKA…PMGI). Polar residues predominate over residues 15-27 (DPNNTRWSGNTDS). In terms of domain architecture, G-patch spans 25-79 (TDSFGHRMMKSQGWTPGEYLGAKDAAHAEFHTEANASHIRVVIKDNTLGLGAKIG). Residues 168 to 182 (SSEESDSSSDEEEEK) are compositionally biased toward acidic residues. 4 stretches are compositionally biased toward basic residues: residues 209–226 (SKKS…KSKK), 242–254 (KSKK…KSKS), 271–283 (KARK…KKRK), and 301–312 (SSKKSKKDKHKS). The span at 313–324 (PSTSKTSTKEST) shows a compositional bias: low complexity. Over residues 325-334 (PIVSESSGRS) the composition is skewed to polar residues.

This sequence belongs to the PINX1 family.

It is found in the nucleus. The protein localises to the nucleolus. Involved in rRNA-processing at A0, A1 and A2 sites and negatively regulates telomerase. The polypeptide is Protein pxr1 (pxr1) (Botryotinia fuckeliana (strain B05.10) (Noble rot fungus)).